The chain runs to 188 residues: UPF0461 protein C5orf24 homolog (188 aa).

A Phosphoserine modification is found at Ser37. A Glycyl lysine isopeptide (Lys-Gly) (interchain with G-Cter in SUMO2) cross-link involves residue Lys75. The segment covering 80 to 92 has biased composition (basic residues); the sequence is KKKNLNRSGKRGR. The disordered stretch occupies residues 80-141; the sequence is KKKNLNRSGK…AGYKVSPGRP (62 aa). Over residues 94 to 107 the composition is skewed to polar residues; it reads SGTTKSAGYRTSTG. Phosphoserine occurs at positions 121 and 180. Residue Lys184 forms a Glycyl lysine isopeptide (Lys-Gly) (interchain with G-Cter in SUMO2) linkage.

The protein belongs to the UPF0461 family.

This chain is UPF0461 protein C5orf24 homolog, found in Mus musculus (Mouse).